Here is a 954-residue protein sequence, read N- to C-terminus: ATPase 9, plasma membrane-type (954 aa).

Residues 1–66 lie on the Cytoplasmic side of the membrane; the sequence is MAGNKDSSWD…EKKENKVLKF (66 aa). The helical transmembrane segment at 67 to 86 threads the bilayer; it reads LGFMWNPLSWVMELAAIMAI. Residues 87–98 lie on the Extracellular side of the membrane; the sequence is ALANGGGRPPDW. The chain crosses the membrane as a helical span at residues 99–119; that stretch reads QDFVGITVLLIINSTISFIEE. At 120 to 248 the chain is on the cytoplasmic side; it reads NNAGNAAAAL…GHFQKVLTAI (129 aa). Residues 249–269 traverse the membrane as a helical segment; sequence GNFCICSIAIGMLIEIVVMYP. At 270–278 the chain is on the extracellular side; that stretch reads IQKRAYRDG. A helical membrane pass occupies residues 279–296; sequence IDNLLVLLIGGIPIAMPT. Residues 297–648 lie on the Cytoplasmic side of the membrane; it reads VLSVTMAIGS…TSRAIFQRMK (352 aa). The active-site 4-aspartylphosphate intermediate is D334. Positions 593 and 597 each coordinate Mg(2+). Residues 649–670 form a helical membrane-spanning segment; that stretch reads NYTIYAVSITIRIVMGFMLLAL. Residues 671–675 are Extracellular-facing; it reads IWKFD. A helical membrane pass occupies residues 676-698; that stretch reads FSPFMVLIVAILNDGTIMTISKD. Topologically, residues 699–714 are cytoplasmic; sequence RVKPSPLPDSWKLKEI. Residues 715–735 traverse the membrane as a helical segment; that stretch reads FATGVVLGTYLAVMTVVFFWA. Over 736–756 the chain is Extracellular; it reads AESTDFFSAKFGVRSISGNPH. Residues 757–777 form a helical membrane-spanning segment; the sequence is ELTAAVYLQVSIVSQALIFVT. Residues 778–789 are Cytoplasmic-facing; the sequence is RSRSWSYVERPG. Residues 790–810 traverse the membrane as a helical segment; sequence FWLISAFFMAQLIATLIAVYA. Over 811 to 818 the chain is Extracellular; sequence NWNFARIR. The chain crosses the membrane as a helical span at residues 819 to 839; it reads GIGWGWAGVIWLYSIVFYIPL. Topologically, residues 840–954 are cytoplasmic; the sequence is DILKFIIRYS…IEAIQQHYTL (115 aa). T886 carries the post-translational modification Phosphothreonine. S936 carries the post-translational modification Phosphoserine. An interaction with 14-3-3 proteins region spans residues 952-954; it reads YTL. At T953 the chain carries Phosphothreonine.

It belongs to the cation transport ATPase (P-type) (TC 3.A.3) family. Type IIIA subfamily. Binds to 14-3-3 proteins. The binding is induced by phosphorylation of Thr-953. Binding to 14-3-3 proteins activates the H(+)-ATPase. In terms of tissue distribution, anther specific. Expressed in guard cells.

The protein resides in the membrane. The catalysed reaction is ATP + H2O + H(+)(in) = ADP + phosphate + 2 H(+)(out). Its function is as follows. The plasma membrane H(+) ATPase of plants and fungi generates a proton gradient that drives the active transport of nutrients by H(+)-symport. The resulting external acidification and/or internal alkinization may mediate growth responses. This chain is ATPase 9, plasma membrane-type (AHA9), found in Arabidopsis thaliana (Mouse-ear cress).